The following is a 658-amino-acid chain: Threonine--tRNA ligase (658 aa).

The region spanning 1–61 (MSDVRVTVQR…AAGDVVEPIT (61 aa)) is the TGS domain. The tract at residues 259-554 (DHRRLGAELD…LLEHYAGALP (296 aa)) is catalytic. Zn(2+) contacts are provided by Cys353, His404, and His531.

This sequence belongs to the class-II aminoacyl-tRNA synthetase family. As to quaternary structure, homodimer. The cofactor is Zn(2+).

It localises to the cytoplasm. The enzyme catalyses tRNA(Thr) + L-threonine + ATP = L-threonyl-tRNA(Thr) + AMP + diphosphate + H(+). Catalyzes the attachment of threonine to tRNA(Thr) in a two-step reaction: L-threonine is first activated by ATP to form Thr-AMP and then transferred to the acceptor end of tRNA(Thr). Also edits incorrectly charged L-seryl-tRNA(Thr). This is Threonine--tRNA ligase from Parafrankia sp. (strain EAN1pec).